Reading from the N-terminus, the 444-residue chain is Methylenetetrahydrofolate--tRNA-(uracil-5-)-methyltransferase TrmFO (444 aa).

Residue 10–15 (GAGLAG) participates in FAD binding.

Belongs to the MnmG family. TrmFO subfamily. The cofactor is FAD.

Its subcellular location is the cytoplasm. The catalysed reaction is uridine(54) in tRNA + (6R)-5,10-methylene-5,6,7,8-tetrahydrofolate + NADH + H(+) = 5-methyluridine(54) in tRNA + (6S)-5,6,7,8-tetrahydrofolate + NAD(+). It carries out the reaction uridine(54) in tRNA + (6R)-5,10-methylene-5,6,7,8-tetrahydrofolate + NADPH + H(+) = 5-methyluridine(54) in tRNA + (6S)-5,6,7,8-tetrahydrofolate + NADP(+). In terms of biological role, catalyzes the folate-dependent formation of 5-methyl-uridine at position 54 (M-5-U54) in all tRNAs. The sequence is that of Methylenetetrahydrofolate--tRNA-(uracil-5-)-methyltransferase TrmFO from Streptococcus suis (strain 98HAH33).